The following is a 299-amino-acid chain: MNVTRLYFRVAGTKQFARYVHKYAAYSSTSFQKKKSHFPSPATLDHPDAGEDAFINLRNENYILNAVFDGVGGWANVGIDPSIFSWGLVREIKKVFNNSDEFQPSPLTLLSKAYAALKKSNTVEAGSSTACLTLFNCGNGKLHSLNLGDSGFLILRNGAIHYASPAQVLQFNMPYQLAIYPRNYRSAENIGPKMGQATVHDLKDNDLVILATDGIFDNIEEKSILDIAGVVDFSSLSNVQKCLDDLAMRICRQAVLNSLDTKWESPFAKTAKSFGFKFQGGKVDDTTITCLLIKSKNYE.

The region spanning 35-293 is the PPM-type phosphatase domain; sequence KSHFPSPATL…DDTTITCLLI (259 aa).

In terms of biological role, confers azacytidine resistance in high copy. This chain is 5-azacytidine resistance protein azr1 (azr1), found in Schizosaccharomyces pombe (strain 972 / ATCC 24843) (Fission yeast).